Consider the following 386-residue polypeptide: Methionine aminotransferase (386 aa).

Residue Lys-236 is modified to N6-(pyridoxal phosphate)lysine.

This sequence belongs to the class-I pyridoxal-phosphate-dependent aminotransferase family. As to quaternary structure, homodimer. It depends on pyridoxal 5'-phosphate as a cofactor.

It is found in the cytoplasm. It catalyses the reaction a 2-oxocarboxylate + L-methionine = 4-methylsulfanyl-2-oxobutanoate + an L-alpha-amino acid. In terms of biological role, shows aminotransferase activity with methionine and histidine as substrates, and to a lesser extent also with phenylalanine. The chain is Methionine aminotransferase (ybdL) from Escherichia coli (strain K12).